A 369-amino-acid chain; its full sequence is MPRRAEILRLPMAAPDDVSAIAASLRDGRLDPGDVVAVFAKTEGNGCVNDFTRPLAVQALRGLFGPLIGEAALGRIAMVMSGGTEGGLSPHWLVIAAREAAGPGPALAVGQARTPPLAAEDLGRRAQVEMVAAGVRAAMREAGLDAGQVHYVQVKCPLLTSERIGAALARGAAPATRDTLKSMGLSRAAAALGAALALGEVPAAAIGETVAETDPGRHARRCGASAGVELLDHEVVVMGMSPDWTGPLVIDHAVMADAIDLRPVAACLGRLGLLGPDGFVDEAGRARLAALLAKAEASADGAIRGRRHTMLTDSDIAPTRHARGFVAGALAGLVGATDLFVSGGAEFQGPDGGGPVAVIARRSGAAGPA.

Residues 1–100 are RU A; it reads MPRRAEILRL…HWLVIAAREA (100 aa). Substrate contacts are provided by residues Arg-53 and 81–82; that span reads SG. Positions 106 to 242 are RU B; it reads ALAVGQARTP…HEVVVMGMSP (137 aa). Residue Lys-155 is part of the active site. Residues Arg-187 and 225–226 contribute to the substrate site; that span reads SA. The active-site Nucleophile is Ser-225. The segment at 248 to 369 is RU C; that stretch reads LVIDHAVMAD…ARRSGAAGPA (122 aa). Position 296 (Glu-296) interacts with Mg(2+). Substrate is bound by residues Arg-323 and 342 to 343; that span reads SG. Positions 345, 348, 349, 350, and 353 each coordinate Mg(2+).

It belongs to the cyclic amide hydrolase (CyAH) family. Homotetramer.

It carries out the reaction cyanurate + H2O = 1-carboxybiuret + H(+). Its pathway is xenobiotic degradation; atrazine degradation; biuret from cyanurate: step 1/1. Inhibited by barbituric acid. Functionally, responsible for the hydrolysis of cyanuric acid, an intermediate formed during catabolism of s-triazine based compounds in herbicides such as atrazine and polymers such as melamine. Catalyzes the hydrolytic opening of the s-triazine ring of cyanuric acid (2,4,6-trihydroxy-s-triazine) to yield carbon dioxide and carboxybiuret, which spontaneously decarboxylates to biuret. The sequence is that of Cyanuric acid amidohydrolase from Methylobacterium sp. (strain 4-46).